The following is a 366-amino-acid chain: Chorismate synthase (366 aa).

Arg-48 and Arg-54 together coordinate NADP(+). Residues Arg-125–Ser-127, Asn-238–Ala-239, Gly-278, Lys-293–Ser-297, and Arg-319 each bind FMN.

The protein belongs to the chorismate synthase family. Homotetramer. The cofactor is FMNH2.

It catalyses the reaction 5-O-(1-carboxyvinyl)-3-phosphoshikimate = chorismate + phosphate. The protein operates within metabolic intermediate biosynthesis; chorismate biosynthesis; chorismate from D-erythrose 4-phosphate and phosphoenolpyruvate: step 7/7. In terms of biological role, catalyzes the anti-1,4-elimination of the C-3 phosphate and the C-6 proR hydrogen from 5-enolpyruvylshikimate-3-phosphate (EPSP) to yield chorismate, which is the branch point compound that serves as the starting substrate for the three terminal pathways of aromatic amino acid biosynthesis. This reaction introduces a second double bond into the aromatic ring system. The polypeptide is Chorismate synthase (Herminiimonas arsenicoxydans).